A 72-amino-acid polypeptide reads, in one-letter code: Alpha-mammal toxin Bot3 (72 aa).

The N-terminal stretch at 1 to 8 is a signal peptide; it reads LVMAGVES. The region spanning 10–72 is the LCN-type CS-alpha/beta domain; it reads KDGYIVDDRN…VRTKGPGRCN (63 aa). 4 disulfide bridges follow: C20–C71, C24–C44, C30–C54, and C34–C56. An Asparagine amide modification is found at N72.

The protein belongs to the long (4 C-C) scorpion toxin superfamily. Sodium channel inhibitor family. Alpha subfamily. When the toxin is not amidated, there are 75% loss of toxicity to mice, and total incapacity to bind rat brain synaptosomes. As to expression, expressed by the venom gland.

The protein resides in the secreted. In terms of biological role, alpha toxins bind voltage-independently at site-3 of sodium channels (Nav) and inhibit the inactivation of the activated channels, thereby blocking neuronal transmission. Is active against mammals and binds with high affinity to rat brain synaptosomes. The polypeptide is Alpha-mammal toxin Bot3 (Buthus occitanus tunetanus (Common European scorpion)).